The chain runs to 442 residues: Trigger factor (442 aa).

Residues 176–259 (GDFISLSLYV…VNAVIEISSP (84 aa)) enclose the PPIase FKBP-type domain.

It belongs to the FKBP-type PPIase family. Tig subfamily.

It localises to the cytoplasm. It carries out the reaction [protein]-peptidylproline (omega=180) = [protein]-peptidylproline (omega=0). In terms of biological role, involved in protein export. Acts as a chaperone by maintaining the newly synthesized protein in an open conformation. Functions as a peptidyl-prolyl cis-trans isomerase. The chain is Trigger factor from Chlamydia trachomatis serovar L2 (strain ATCC VR-902B / DSM 19102 / 434/Bu).